A 97-amino-acid chain; its full sequence is YcgL domain-containing protein PST_1364 (97 aa).

In terms of domain architecture, YcgL spans leucine 3–proline 87.

This Stutzerimonas stutzeri (strain A1501) (Pseudomonas stutzeri) protein is YcgL domain-containing protein PST_1364.